The chain runs to 232 residues: Ornithine carbamoyltransferase (232 aa).

Carbamoyl phosphate contacts are provided by residues Gln-15, Arg-39, and 66 to 69 (HPTQ). L-ornithine-binding positions include Asn-99, Asp-163, and 167–168 (SM). Carbamoyl phosphate contacts are provided by residues 204–207 (HCLP) and Thr-232.

It belongs to the aspartate/ornithine carbamoyltransferase superfamily. OTCase family.

The protein resides in the cytoplasm. The enzyme catalyses carbamoyl phosphate + L-ornithine = L-citrulline + phosphate + H(+). It participates in amino-acid biosynthesis; L-arginine biosynthesis; L-arginine from L-ornithine and carbamoyl phosphate: step 1/3. Its function is as follows. Reversibly catalyzes the transfer of the carbamoyl group from carbamoyl phosphate (CP) to the N(epsilon) atom of ornithine (ORN) to produce L-citrulline. The chain is Ornithine carbamoyltransferase (argF) from Neisseria flava.